Reading from the N-terminus, the 127-residue chain is uncharacterized protein (127 aa).

The chain crosses the membrane as a helical span at residues Ile84 to Phe103.

Its subcellular location is the membrane. This is an uncharacterized protein from Saccharomyces cerevisiae (strain ATCC 204508 / S288c) (Baker's yeast).